Reading from the N-terminus, the 520-residue chain is Flavin-dependent halogenase radH (520 aa).

3 residues coordinate FAD: G14, A17, and E47. Residues S330 and G331 each coordinate chloride.

The protein belongs to the flavin-dependent halogenase family.

The protein operates within secondary metabolite biosynthesis. Non-heme halogenase; part of the gene cluster that mediates the biosynthesis of radicicol, a resorcylic acid lactone (RAL) that irreversibly inhibits the HSP90 molecular chaperone, an important target for cancer chemotherapy. The cluster encodes only two apparent post-PKS enzymes, a cytochrome P450 monooxygenase (radP) and a non-heme halogenase (radH) that introduce the epoxide and the chlorine, respectively. If this cluster includes all the genes required for radicicol biosynthesis, the remaining structural features of radicicol are presumably generated by the PKSs rads1 and rads2. The C-2' ketone could arise if the R-PKS rads1 and NR-PKS rads2 each carry out four iterations, in contrast to the five iteration-three iteration split for the hypothemycin PKSs. The origin of the cis 5',6' double bond is not known. The radicicol R-PKS rads1 ER domain may catalyze either double bond isomerization or reduction in the third iteration. The polypeptide is Flavin-dependent halogenase radH (Floropilus chiversii (Chaetomium chiversii)).